The primary structure comprises 227 residues: UPF0173 metal-dependent hydrolase Saci_1512 (227 aa).

Belongs to the UPF0173 family.

This Sulfolobus acidocaldarius (strain ATCC 33909 / DSM 639 / JCM 8929 / NBRC 15157 / NCIMB 11770) protein is UPF0173 metal-dependent hydrolase Saci_1512.